A 633-amino-acid polypeptide reads, in one-letter code: Probable potassium transport system protein Kup (633 aa).

12 helical membrane-spanning segments follow: residues 21–41, 61–81, 112–132, 149–169, 176–196, 217–237, 258–278, 290–310, 348–368, 377–397, 398–418, and 430–450; these read MLVA…LYTL, ILSL…MMFV, LLVV…MITP, GIDH…FLIQ, IGIL…ALGV, FFMV…LALT, WFLL…ALLL, LLAP…ATVI, IYIG…VIGF, AYGV…SAVM, LLLW…FLLV, and IVQG…LMTT.

The protein belongs to the HAK/KUP transporter (TC 2.A.72) family.

Its subcellular location is the cell inner membrane. It carries out the reaction K(+)(in) + H(+)(in) = K(+)(out) + H(+)(out). Transport of potassium into the cell. Likely operates as a K(+):H(+) symporter. This is Probable potassium transport system protein Kup from Pseudomonas fluorescens (strain Pf0-1).